Here is a 434-residue protein sequence, read N- to C-terminus: Enolase (434 aa).

The disordered stretch occupies residues 29 to 56 (SGHTGRAAVPSGASTGSREALEMRDGDK). Basic and acidic residues predominate over residues 47–56 (EALEMRDGDK). Glutamine 163 is a (2R)-2-phosphoglycerate binding site. Residue glutamate 205 is the Proton donor of the active site. Residues aspartate 242, glutamate 285, and aspartate 312 each coordinate Mg(2+). (2R)-2-phosphoglycerate-binding residues include lysine 337, arginine 366, serine 367, and lysine 388. Residue lysine 337 is the Proton acceptor of the active site.

Belongs to the enolase family. As to quaternary structure, homooctamer. Requires Mg(2+) as cofactor.

It is found in the cytoplasm. The protein localises to the secreted. Its subcellular location is the cell surface. It carries out the reaction (2R)-2-phosphoglycerate = phosphoenolpyruvate + H2O. It participates in carbohydrate degradation; glycolysis; pyruvate from D-glyceraldehyde 3-phosphate: step 4/5. Catalyzes the reversible conversion of 2-phosphoglycerate (2-PG) into phosphoenolpyruvate (PEP). It is essential for the degradation of carbohydrates via glycolysis. This chain is Enolase, found in Nitratidesulfovibrio vulgaris (strain DSM 19637 / Miyazaki F) (Desulfovibrio vulgaris).